Consider the following 103-residue polypeptide: Co-chaperonin GroES (103 aa).

This sequence belongs to the GroES chaperonin family. In terms of assembly, heptamer of 7 subunits arranged in a ring. Interacts with the chaperonin GroEL.

The protein resides in the cytoplasm. Functionally, together with the chaperonin GroEL, plays an essential role in assisting protein folding. The GroEL-GroES system forms a nano-cage that allows encapsulation of the non-native substrate proteins and provides a physical environment optimized to promote and accelerate protein folding. GroES binds to the apical surface of the GroEL ring, thereby capping the opening of the GroEL channel. The polypeptide is Co-chaperonin GroES (Gloeothece citriformis (strain PCC 7424) (Cyanothece sp. (strain PCC 7424))).